The primary structure comprises 349 residues: Anthranilate phosphoribosyltransferase (349 aa).

5-phospho-alpha-D-ribose 1-diphosphate-binding positions include Gly84, 87-88 (GD), Thr92, 94-97 (NIST), 112-120 (KHGNRAASS), and Ser124. Residue Gly84 coordinates anthranilate. Ser96 serves as a coordination point for Mg(2+). Residue Asn115 participates in anthranilate binding. Arg170 is an anthranilate binding site. Mg(2+) is bound by residues Asp228 and Glu229.

It belongs to the anthranilate phosphoribosyltransferase family. As to quaternary structure, homodimer. Mg(2+) serves as cofactor.

It catalyses the reaction N-(5-phospho-beta-D-ribosyl)anthranilate + diphosphate = 5-phospho-alpha-D-ribose 1-diphosphate + anthranilate. It functions in the pathway amino-acid biosynthesis; L-tryptophan biosynthesis; L-tryptophan from chorismate: step 2/5. In terms of biological role, catalyzes the transfer of the phosphoribosyl group of 5-phosphorylribose-1-pyrophosphate (PRPP) to anthranilate to yield N-(5'-phosphoribosyl)-anthranilate (PRA). The polypeptide is Anthranilate phosphoribosyltransferase (Leifsonia xyli subsp. xyli (strain CTCB07)).